The sequence spans 248 residues: ATP synthase subunit a, chloroplastic (248 aa).

5 helical membrane-spanning segments follow: residues 38-58, 96-116, 135-155, 200-220, and 221-241; these read QVLI…TIAV, VPFI…GALL, INTT…AGLA, LVVA…VMFL, and GLFT…AYIG.

It belongs to the ATPase A chain family. As to quaternary structure, F-type ATPases have 2 components, CF(1) - the catalytic core - and CF(0) - the membrane proton channel. CF(1) has five subunits: alpha(3), beta(3), gamma(1), delta(1), epsilon(1). CF(0) has four main subunits: a, b, b' and c.

The protein localises to the plastid. It localises to the chloroplast thylakoid membrane. Key component of the proton channel; it plays a direct role in the translocation of protons across the membrane. The polypeptide is ATP synthase subunit a, chloroplastic (Cycas taitungensis (Prince sago)).